Here is a 286-residue protein sequence, read N- to C-terminus: MATRVLHSSCSGLYRAAGPARGKGHATAVIRSLSASHNRPREDSWFKSLFVRKVDPRKDAHSHLLAKKEDNNLYKIQFHNVKPECLEAYNKLCEDVLTNIHTDKAYPCELVGTWNTWYGEQDQAVHLWRYRGGYPALTEVMSKLKNNKEFLEYRSERGKMLLSRRNQLLLEFSFWNEPVPRDGPNIYELRSYQLRPGTMIEWGNYWARAIGYRQHNREAVGGFFSQIGDLYMVHHLWAYKDLQSREDTRNAAWQHEGWDEVVYYTVPLIQHMESRIMIPLKNSPLK.

A mitochondrion-targeting transit peptide spans Met-1 to Pro-40.

It belongs to the NipSnap family.

It is found in the mitochondrion matrix. In terms of biological role, protein involved in mitophagy. Accumulates on the mitochondria surface in response to mitochondrial depolarization and acts as a 'eat me' signal by recruiting proteins involved in selective autophagy. The polypeptide is Protein NipSnap homolog 2 (nipsnap2) (Danio rerio (Zebrafish)).